The chain runs to 80 residues: Acyl carrier protein (80 aa).

A Carrier domain is found at 4–79; that stretch reads EAILEKVRSI…DAVKYIEDKQ (76 aa). S39 is modified (O-(pantetheine 4'-phosphoryl)serine).

Belongs to the acyl carrier protein (ACP) family. 4'-phosphopantetheine is transferred from CoA to a specific serine of apo-ACP by AcpS. This modification is essential for activity because fatty acids are bound in thioester linkage to the sulfhydryl of the prosthetic group.

The protein localises to the cytoplasm. The protein operates within lipid metabolism; fatty acid biosynthesis. Its function is as follows. Carrier of the growing fatty acid chain in fatty acid biosynthesis. This Prochlorococcus marinus (strain MIT 9313) protein is Acyl carrier protein.